A 652-amino-acid chain; its full sequence is Acetyl-coenzyme A synthetase (652 aa).

CoA is bound by residues 191 to 194 (RAGR), Thr-311, and Asn-335. ATP is bound by residues 387 to 389 (GEP), 411 to 416 (DTWWQT), Asp-500, and Arg-515. Ser-523 is a CoA binding site. Arg-526 is an ATP binding site. Mg(2+) contacts are provided by Val-537, His-539, and Ile-542. Arg-584 is a CoA binding site. Lys-609 is modified (N6-acetyllysine).

The protein belongs to the ATP-dependent AMP-binding enzyme family. It depends on Mg(2+) as a cofactor. Acetylated. Deacetylation by the SIR2-homolog deacetylase activates the enzyme.

It carries out the reaction acetate + ATP + CoA = acetyl-CoA + AMP + diphosphate. Functionally, catalyzes the conversion of acetate into acetyl-CoA (AcCoA), an essential intermediate at the junction of anabolic and catabolic pathways. Acs undergoes a two-step reaction. In the first half reaction, Acs combines acetate with ATP to form acetyl-adenylate (AcAMP) intermediate. In the second half reaction, it can then transfer the acetyl group from AcAMP to the sulfhydryl group of CoA, forming the product AcCoA. In terms of biological role, enables the cell to use acetate during aerobic growth to generate energy via the TCA cycle, and biosynthetic compounds via the glyoxylate shunt. Acetylates CheY, the response regulator involved in flagellar movement and chemotaxis. This is Acetyl-coenzyme A synthetase from Cronobacter sakazakii (strain ATCC BAA-894) (Enterobacter sakazakii).